The primary structure comprises 78 residues: MKTSVLVTVLGLAVISVLCSASQDEEQDMYDELLSAVFEVNDELQSEARCGEKNDRCKTNQDCCSGFRCTKFRRCGRR.

Residues 1–21 form the signal peptide; that stretch reads MKTSVLVTVLGLAVISVLCSA. A propeptide spanning residues 22 to 49 is cleaved from the precursor; that stretch reads SQDEEQDMYDELLSAVFEVNDELQSEAR. 3 disulfides stabilise this stretch: cysteine 50/cysteine 64, cysteine 57/cysteine 69, and cysteine 63/cysteine 75.

Belongs to the neurotoxin 10 (Hwtx-1) family. 64 (Jztx-20) subfamily. In terms of tissue distribution, expressed by the venom gland.

The protein localises to the secreted. Probable ion channel inhibitor. The protein is U23-theraphotoxin-Cg1a 1 of Chilobrachys guangxiensis (Chinese earth tiger tarantula).